The sequence spans 246 residues: NAD-dependent protein deacylase (246 aa).

In terms of domain architecture, Deacetylase sirtuin-type spans 1–245 (MKEFITKHRD…ELIREILDNP (245 aa)). 20–39 (GAGISAESGIPTFRGSEGLW) provides a ligand contact to NAD(+). Substrate is bound by residues Tyr64 and Arg67. 98 to 101 (QNVD) contributes to the NAD(+) binding site. His116 (proton acceptor) is an active-site residue. Residues Cys124, Cys127, Cys146, and Cys149 each coordinate Zn(2+). Residues 186–188 (GTS), 212–214 (NPE), and Thr230 each bind NAD(+).

It belongs to the sirtuin family. Class III subfamily. The cofactor is Zn(2+).

Its subcellular location is the cytoplasm. The enzyme catalyses N(6)-acetyl-L-lysyl-[protein] + NAD(+) + H2O = 2''-O-acetyl-ADP-D-ribose + nicotinamide + L-lysyl-[protein]. It catalyses the reaction N(6)-succinyl-L-lysyl-[protein] + NAD(+) + H2O = 2''-O-succinyl-ADP-D-ribose + nicotinamide + L-lysyl-[protein]. Functionally, NAD-dependent lysine deacetylase and desuccinylase that specifically removes acetyl and succinyl groups on target proteins. Modulates the activities of several proteins which are inactive in their acylated form. In Leptospira interrogans serogroup Icterohaemorrhagiae serovar Lai (strain 56601), this protein is NAD-dependent protein deacylase.